We begin with the raw amino-acid sequence, 61 residues long: MKYTEIKDKTAGELATMLKEKKVLLFTLRQKLKTMQLTNPKEISEVKKDIARINTAISALK.

Belongs to the universal ribosomal protein uL29 family.

The polypeptide is Large ribosomal subunit protein uL29 (Campylobacter lari (strain RM2100 / D67 / ATCC BAA-1060)).